The primary structure comprises 302 residues: Protease HtpX homolog (302 aa).

The helical transmembrane segment at 27–47 (LLMAIGGIIGGTAGMLIALII) threads the bilayer. Zn(2+) is bound at residue His-141. Glu-142 is an active-site residue. His-145 serves as a coordination point for Zn(2+). The next 2 helical transmembrane spans lie at 151-171 (VLVA…ANMA) and 195-215 (IGAI…QLAI). Position 220 (Glu-220) interacts with Zn(2+).

Belongs to the peptidase M48B family. Zn(2+) serves as cofactor.

Its subcellular location is the cell inner membrane. The sequence is that of Protease HtpX homolog from Aquifex aeolicus (strain VF5).